The sequence spans 810 residues: MDNQATQRLNDLSLEPAPSHDEQDGSGLVIDIDQRKIGDEQAGVVVDDETPPLEQQDSHESLAADSRNANFSYHENQQLLENGTKQLALDEHDSHSAILEQPSHSTNCSSSNIAAMNKGHDSADHASQNSGGKPRTLSASAQHILPETLKSFAGAPVVNKQVRTSASYKMGMLADDASQQFLDDPSSELIDLYSKVAECRNLRAKYQTISVQNDDQNPKNKPGWVVYPPPPKPSYNSDTKTVVPVTNKPDAEVFDFTKCEIPGEDPDWEFTLNDDDSYVVHRSGKTDELIAQIPTLRDYYLDLEKMISISSDGPAKSFAYRRLQYLEARWNLYYLLNEYQETSVSKRNPHRDFYNVRKVDTHVHHSACMNQKHLLRFIKHKLRHSKDEKVIFRDGKLLTLDEVFRSLHLTGYDLSIDTLDMHAHKDTFHRFDKFNLKYNPIGESRLREIFLKTNNYIKGTYLADITKQVIFDLENSKYQNCEYRISVYGRSLDEWDKLASWVIDNKVISHNVRWLVQIPRLYDIYKKTGIVQSFQDICKNLFQPLFEVTKNPQSHPKLHVFLQRVIGFDSVDDESKVDRRFHRKYPKPSLWEAPQNPPYSYYLYYLYSNVASLNQWRAKRGFNTLVLRPHCGEAGDPEHLVSAYLLAHGISHGILLRKVPFVQYLYYLDQVGIAMSPLSNNALFLTYDKNPFPRYFKRGLNVSLSTDDPLQFSYTREPLIEEYSVAAQIYKLSNVDMCELARNSVLQSGWEAQIKKHWIGKDFDKSGVEGNDVVRTNVPDIRINYRYDTLSTELELVNHFANFKRTIEEK.

The span at 1–10 shows a compositional bias: polar residues; that stretch reads MDNQATQRLN. Disordered regions lie at residues 1-61 and 114-137; these read MDNQ…SHES and AAMNKGHDSADHASQNSGGKPRTL. 3 positions are modified to phosphoserine: serine 19, serine 58, and serine 61. The span at 125-137 shows a compositional bias: polar residues; it reads HASQNSGGKPRTL. Serine 138 carries the phosphoserine modification. Zn(2+)-binding residues include histidine 362 and histidine 364. Substrate contacts are provided by residues histidine 364 and 433 to 438; that span reads KFNLKY. Histidine 630 contacts Zn(2+). Glutamate 633 lines the substrate pocket. Histidine 652 serves as the catalytic Proton acceptor. Aspartate 707 is a Zn(2+) binding site. 708–711 contributes to the substrate binding site; the sequence is DPLQ.

The protein belongs to the metallo-dependent hydrolases superfamily. Adenosine and AMP deaminases family. In terms of assembly, homotetramer. Zn(2+) serves as cofactor.

It catalyses the reaction AMP + H2O + H(+) = IMP + NH4(+). The protein operates within purine metabolism; IMP biosynthesis via salvage pathway; IMP from AMP: step 1/1. AMP deaminase plays a critical role in energy metabolism. The sequence is that of AMP deaminase (AMD1) from Saccharomyces cerevisiae (strain ATCC 204508 / S288c) (Baker's yeast).